An 886-amino-acid polypeptide reads, in one-letter code: Vam6/Vps39-like protein (886 aa).

One can recognise a CNH domain in the interval 15-294; that stretch reads PLQIDCLAAW…RFITSGGSNI (280 aa). The stretch at 573–750 is one CHCR repeat; the sequence is FTEDLPEVES…LLRMYLSPPS (178 aa).

It belongs to the VAM6/VPS39 family. In terms of assembly, homooligomer. Interacts with TGFBR2 and, less efficiently, with TGFBR1; interaction with TGFBR2 is independent of the receptor kinase activity and of the presence of TGF-beta. Also interacts with ACVR2B, but not with BMPR2. Interacts with SMAD4, preferentially following TGF-beta treatment. Component of the putative homotypic fusion and vacuole protein sorting (HOPS) complex; the core of which composed of the class C Vps proteins VPS11, VPS16, VPS18 and VPS33A, is associated with VPS39 and VPS41. Interacts with PLEKHM2; involved in VPS39 recruitment to ARL8B-containing lysosomes. Associates with adapter protein complex 3 (AP-3) and clathrin:AP-3 complexes. Interacts with STX17; this interaction is increased in the absence of TMEM39A. Interacts with RAB7, RAB2A and RAB2B. Interacts with RAB2A (GTP-bound); the interaction contributes to obtaining a functional HOPS complex that promotes autophagosome-lysosome membrane fusion driven by STX17-SNAP29-VAMP8. Interacts with RAB39A (GTP-bound) and RAB39B (GTP-bound); interaction with RAB39A contributes to obtaining a functional HOPS complex.

It is found in the cytoplasm. The protein localises to the lysosome membrane. Its subcellular location is the late endosome membrane. In terms of biological role, regulator of TGF-beta/activin signaling, inhibiting SMAD3- and activating SMAD2-dependent transcription. Acts by interfering with SMAD3/SMAD4 complex formation, this would lead to inhibition of SMAD3-dependent transcription and relieve SMAD3 inhibition of SMAD2-dependent promoters, thus increasing SMAD2-dependent transcription. Plays a role in vesicle-mediated protein trafficking to lysosomal compartments including the endocytic membrane transport and autophagic pathways. Acts as a component of the HOPS endosomal tethering complex which is proposed to be involved in the Rab5-to-Rab7 endosome conversion probably implicating MON1A/B, and via binding SNAREs and SNARE complexes to mediate tethering and docking events during SNARE-mediated membrane fusion. The HOPS complex is proposed to be recruited to Rab7 on the late endosomal membrane and to regulate late endocytic, phagocytic and autophagic traffic towards lysosomes. Involved in homotypic vesicle fusions between late endosomes and in heterotypic fusions between late endosomes and lysosomes. Required for fusion of endosomes and autophagosomes with lysosomes. This Mus musculus (Mouse) protein is Vam6/Vps39-like protein.